Consider the following 821-residue polypeptide: Lon protease (821 aa).

A Lon N-terminal domain is found at 18-216; sequence LPLMSLREVV…KVYELLQGEI (199 aa). 368–375 contacts ATP; it reads GPPGVGKT. The region spanning 606 to 787 is the Lon proteolytic domain; the sequence is TSQVGVCTGL…DEVLPQALMA (182 aa). Active-site residues include Ser-693 and Lys-736.

The protein belongs to the peptidase S16 family. As to quaternary structure, homohexamer. Organized in a ring with a central cavity.

It localises to the cytoplasm. The catalysed reaction is Hydrolysis of proteins in presence of ATP.. Functionally, ATP-dependent serine protease that mediates the selective degradation of mutant and abnormal proteins as well as certain short-lived regulatory proteins. Required for cellular homeostasis and for survival from DNA damage and developmental changes induced by stress. Degrades polypeptides processively to yield small peptide fragments that are 5 to 10 amino acids long. Binds to DNA in a double-stranded, site-specific manner. This chain is Lon protease, found in Nitratidesulfovibrio vulgaris (strain ATCC 29579 / DSM 644 / CCUG 34227 / NCIMB 8303 / VKM B-1760 / Hildenborough) (Desulfovibrio vulgaris).